Here is a 253-residue protein sequence, read N- to C-terminus: Adapter protein MecA (253 aa).

This sequence belongs to the MecA family. In terms of assembly, homodimer.

Enables the recognition and targeting of unfolded and aggregated proteins to the ClpC protease or to other proteins involved in proteolysis. This Streptococcus pyogenes serotype M18 (strain MGAS8232) protein is Adapter protein MecA.